The following is a 120-amino-acid chain: Immunoglobulin kappa variable 2-30 (120 aa).

Residues 1–20 (MRLPAQLLGLLMLWVPGSSG) form the signal peptide. The segment at 21 to 43 (DVVMTQSPLSLPVTLGQPASISC) is framework-1. One can recognise an Ig-like domain in the interval 21–120 (DVVMTQSPLS…YYCMQGTHWP (100 aa)). Residues Cys-43 and Cys-113 are joined by a disulfide bond. The segment at 44–59 (RSSQSLVYSDGNTYLN) is complementarity-determining-1. Residues 60 to 74 (WFQQRPGQSPRRLIY) are framework-2. The interval 75-81 (KVSNRDS) is complementarity-determining-2. A framework-3 region spans residues 82 to 113 (GVPDRFSGSGSGTDFTLKISRVEAEDVGVYYC). The interval 114–120 (MQGTHWP) is complementarity-determining-3.

As to quaternary structure, immunoglobulins are composed of two identical heavy chains and two identical light chains; disulfide-linked.

It is found in the secreted. It localises to the cell membrane. Functionally, v region of the variable domain of immunoglobulin light chains that participates in the antigen recognition. Immunoglobulins, also known as antibodies, are membrane-bound or secreted glycoproteins produced by B lymphocytes. In the recognition phase of humoral immunity, the membrane-bound immunoglobulins serve as receptors which, upon binding of a specific antigen, trigger the clonal expansion and differentiation of B lymphocytes into immunoglobulins-secreting plasma cells. Secreted immunoglobulins mediate the effector phase of humoral immunity, which results in the elimination of bound antigens. The antigen binding site is formed by the variable domain of one heavy chain, together with that of its associated light chain. Thus, each immunoglobulin has two antigen binding sites with remarkable affinity for a particular antigen. The variable domains are assembled by a process called V-(D)-J rearrangement and can then be subjected to somatic hypermutations which, after exposure to antigen and selection, allow affinity maturation for a particular antigen. The sequence is that of Immunoglobulin kappa variable 2-30 from Homo sapiens (Human).